We begin with the raw amino-acid sequence, 381 residues long: tRNA-specific 2-thiouridylase MnmA (381 aa).

Residues 9 to 16 (GMSGGVDS) and M35 each bind ATP. An interaction with target base in tRNA region spans residues 95 to 97 (NPD). C100 serves as the catalytic Nucleophile. An intrachain disulfide couples C100 to C196. Residue G124 participates in ATP binding. Positions 146–148 (KDQ) are interaction with tRNA. C196 acts as the Cysteine persulfide intermediate in catalysis. An interaction with tRNA region spans residues 308-309 (RY).

Belongs to the MnmA/TRMU family.

The protein localises to the cytoplasm. The enzyme catalyses S-sulfanyl-L-cysteinyl-[protein] + uridine(34) in tRNA + AH2 + ATP = 2-thiouridine(34) in tRNA + L-cysteinyl-[protein] + A + AMP + diphosphate + H(+). Its function is as follows. Catalyzes the 2-thiolation of uridine at the wobble position (U34) of tRNA, leading to the formation of s(2)U34. The protein is tRNA-specific 2-thiouridylase MnmA of Paraburkholderia xenovorans (strain LB400).